A 210-amino-acid polypeptide reads, in one-letter code: Na(+)-translocating NADH-quinone reductase subunit D (210 aa).

Helical transmembrane passes span valine 10–serine 30, leucine 42–isoleucine 62, isoleucine 72–alanine 92, valine 103–methionine 123, phenylalanine 143–phenylalanine 163, and asparagine 178–isoleucine 198.

This sequence belongs to the NqrDE/RnfAE family. In terms of assembly, composed of six subunits; NqrA, NqrB, NqrC, NqrD, NqrE and NqrF.

The protein resides in the cell inner membrane. The catalysed reaction is a ubiquinone + n Na(+)(in) + NADH + H(+) = a ubiquinol + n Na(+)(out) + NAD(+). Functionally, NQR complex catalyzes the reduction of ubiquinone-1 to ubiquinol by two successive reactions, coupled with the transport of Na(+) ions from the cytoplasm to the periplasm. NqrA to NqrE are probably involved in the second step, the conversion of ubisemiquinone to ubiquinol. This is Na(+)-translocating NADH-quinone reductase subunit D from Pseudoalteromonas atlantica (strain T6c / ATCC BAA-1087).